We begin with the raw amino-acid sequence, 287 residues long: Bifunctional protein FolD (287 aa).

NADP(+) contacts are provided by residues 160–162, Ser-189, and Thr-230; that span reads GRS.

This sequence belongs to the tetrahydrofolate dehydrogenase/cyclohydrolase family. In terms of assembly, homodimer.

The enzyme catalyses (6R)-5,10-methylene-5,6,7,8-tetrahydrofolate + NADP(+) = (6R)-5,10-methenyltetrahydrofolate + NADPH. It carries out the reaction (6R)-5,10-methenyltetrahydrofolate + H2O = (6R)-10-formyltetrahydrofolate + H(+). It functions in the pathway one-carbon metabolism; tetrahydrofolate interconversion. Catalyzes the oxidation of 5,10-methylenetetrahydrofolate to 5,10-methenyltetrahydrofolate and then the hydrolysis of 5,10-methenyltetrahydrofolate to 10-formyltetrahydrofolate. The sequence is that of Bifunctional protein FolD from Chlamydia muridarum (strain MoPn / Nigg).